A 1169-amino-acid chain; its full sequence is Rabankyrin-5 (1169 aa).

Ala2 carries the N-acetylalanine modification. Positions 68–130 (SDLKIKVGDR…IYTDELEFRE (63 aa)) constitute a BTB domain. ANK repeat units lie at residues 217–247 (KTEY…QLPG), 255–284 (NGDL…DVDM), 288–317 (SGWS…FVNA), 322–362 (AQET…NPNM), and 366–396 (KGRT…DLEL). Phosphoserine is present on Ser270. Positions 421 to 423 (NPF) match the NPF motif. ANK repeat units lie at residues 490-519 (WGET…NPNL), 542-572 (HLQT…ALHA), 588-617 (RDQT…AIND), 621-650 (DGQT…DINV), 654-683 (DGET…DMSV), 687-716 (KGNP…DATC), 724-753 (CLQT…DVNS), 769-798 (DGQT…NVNA), 802-832 (EGRT…HLNV), 836-865 (QGLT…GAAE), 870-899 (KGRN…NVNS), 905-934 (SKLT…KVNE), 938-967 (HRQT…DFAA), 971-1001 (NGNN…DAEA), 1005-1037 (RGQS…GYPL), and 1043-1072 (DGST…RLGV). The segment at 650–759 (VRTQDGETAL…DVNSPRQPGA (110 aa)) is interaction with RHOD and RAB5A. The FYVE-type zinc-finger motif lies at 1104-1164 (WCDGSYCYEC…VCNICFDVLT (61 aa)). Positions 1110, 1113, 1126, 1129, 1134, 1137, 1156, and 1159 each coordinate Zn(2+).

As to quaternary structure, interacts with RAB5A (in GTP-bound form). Interacts with RHOD (independent of GTP-loaded status). Interacts with EHD1. Interacts with VPS26A; the interaction is independent of EHD1 and is indicative for an association with the cargo recognition subcomplex of the retromer complex. In terms of tissue distribution, high expression in whole adult brain and intermediate expression in all other tissues and specific brain regions examined, including fetal brain.

The protein localises to the cytoplasm. The protein resides in the endosome membrane. It is found in the early endosome. Functionally, proposed effector of Rab5. Binds to phosphatidylinositol 3-phosphate (PI(3)P). Involved in homotypic early endosome fusion and to a lesser extent in heterotypic fusion of chlathrin-coated vesicles with early endosomes. Involved in macropinocytosis; the function is dependent on Rab5-GTP. Required for correct endosomal localization. Involved in the internalization and trafficking of activated tyrosine kinase receptors such as PDGFRB. Regulates the subcellular localization of the retromer complex in a EHD1-dependent manner. Involved in endosome-to-Golgi transport and biosynthetic transport to late endosomes and lysosomes indicative for a regulation of retromer complex-mediated retrograde transport. The protein is Rabankyrin-5 (ANKFY1) of Homo sapiens (Human).